A 295-amino-acid polypeptide reads, in one-letter code: Hepatic leukemia factor (295 aa).

Residues 37-52 are compositionally biased toward basic and acidic residues; sequence EDAFSKDKDKEKKLDD. Disordered regions lie at residues 37-70 and 93-167; these read EDAF…PTLW and SENG…IDPD. Residues 225-288 form the bZIP domain; the sequence is DDKYWARRRK…GKCKNILAKY (64 aa). A basic motif region spans residues 227–247; that stretch reads KYWARRRKNNMAAKRSRDARR. Positions 248–255 are leucine-zipper; sequence LKENQIAI.

The protein belongs to the bZIP family. PAR subfamily. Binds DNA specifically as homodimer or heterodimer with other PAR factors. Highly expressed in liver; lower levels in lung and kidney.

It is found in the nucleus. The polypeptide is Hepatic leukemia factor (HLF) (Homo sapiens (Human)).